We begin with the raw amino-acid sequence, 397 residues long: Nuclear egress protein 2 (397 aa).

Residues 1–358 (MEMNKVLHQD…GPSRPQSGPW (358 aa)) are Perinuclear space-facing. 2 disordered regions span residues 205-245 (RTAG…PPPP) and 291-332 (AAAG…PSLE). Ser-216 is subject to Phosphoserine. Composition is skewed to low complexity over residues 224–239 (PSCSPTMVAAGGAAAG) and 291–301 (AAAGQDVGGSA). Basic residues predominate over residues 310–322 (SRRRGVSTHHRHP). Residues 359-381 (LPARFATLGPLVLALLLVLALLW) form a helical membrane-spanning segment. The Nuclear portion of the chain corresponds to 382-397 (RGHGQSSSPTRSAHRD).

Belongs to the herpesviridae NEC2 protein family. Forms a heterohexameric complex with NEC1. Interacts with host UBA7 and RNF170; this interaction promotes UBA7 proteasomal degradation. Phosphorylated. Phosphorylation by viral kinase UL97 at Ser-216 plays an important role for correct viral nuclear egress complex (NEC) localization.

Its subcellular location is the host nucleus inner membrane. Functionally, plays an essential role in virion nuclear egress, the first step of virion release from infected cell. Within the host nucleus, NEC1 interacts with the newly formed capsid through the vertexes and directs it to the inner nuclear membrane by associating with NEC2. Induces the budding of the capsid at the inner nuclear membrane as well as its envelopment into the perinuclear space. There, the NEC1/NEC2 complex promotes the fusion of the enveloped capsid with the outer nuclear membrane and the subsequent release of the viral capsid into the cytoplasm where it will reach the secondary budding sites in the host Golgi or trans-Golgi network. Inhibits host ISGylation and subsequent innate antiviral response by targeting host UBA7 for proteasomal degradation. This chain is Nuclear egress protein 2, found in Human cytomegalovirus (strain AD169) (HHV-5).